Here is a 353-residue protein sequence, read N- to C-terminus: Protein pelota homolog (353 aa).

The protein belongs to the eukaryotic release factor 1 family. Pelota subfamily. Monomer. A divalent metal cation is required as a cofactor.

The protein resides in the cytoplasm. May function in recognizing stalled ribosomes, interact with stem-loop structures in stalled mRNA molecules, and effect endonucleolytic cleavage of the mRNA. May play a role in the release non-functional ribosomes and degradation of damaged mRNAs. Has endoribonuclease activity. This Methanopyrus kandleri (strain AV19 / DSM 6324 / JCM 9639 / NBRC 100938) protein is Protein pelota homolog.